The chain runs to 196 residues: FMN-dependent NADH:quinone oxidoreductase (196 aa).

Serine 10 contacts FMN.

The protein belongs to the azoreductase type 1 family. Homodimer. It depends on FMN as a cofactor.

The catalysed reaction is 2 a quinone + NADH + H(+) = 2 a 1,4-benzosemiquinone + NAD(+). It carries out the reaction N,N-dimethyl-1,4-phenylenediamine + anthranilate + 2 NAD(+) = 2-(4-dimethylaminophenyl)diazenylbenzoate + 2 NADH + 2 H(+). In terms of biological role, quinone reductase that provides resistance to thiol-specific stress caused by electrophilic quinones. Functionally, also exhibits azoreductase activity. Catalyzes the reductive cleavage of the azo bond in aromatic azo compounds to the corresponding amines. This Cereibacter sphaeroides (strain ATCC 17029 / ATH 2.4.9) (Rhodobacter sphaeroides) protein is FMN-dependent NADH:quinone oxidoreductase.